A 498-amino-acid polypeptide reads, in one-letter code: UDP-N-acetylmuramate--L-alanine ligase (498 aa).

Position 122-128 (122-128) interacts with ATP; it reads GTHGKTS.

The protein belongs to the MurCDEF family.

It localises to the cytoplasm. It carries out the reaction UDP-N-acetyl-alpha-D-muramate + L-alanine + ATP = UDP-N-acetyl-alpha-D-muramoyl-L-alanine + ADP + phosphate + H(+). Its pathway is cell wall biogenesis; peptidoglycan biosynthesis. Its function is as follows. Cell wall formation. This chain is UDP-N-acetylmuramate--L-alanine ligase, found in Corynebacterium jeikeium (strain K411).